The sequence spans 371 residues: 4-hydroxy-3-methylbut-2-en-1-yl diphosphate synthase (flavodoxin) (371 aa).

[4Fe-4S] cluster is bound by residues Cys-268, Cys-271, Cys-303, and Glu-310.

This sequence belongs to the IspG family. It depends on [4Fe-4S] cluster as a cofactor.

It catalyses the reaction (2E)-4-hydroxy-3-methylbut-2-enyl diphosphate + oxidized [flavodoxin] + H2O + 2 H(+) = 2-C-methyl-D-erythritol 2,4-cyclic diphosphate + reduced [flavodoxin]. It participates in isoprenoid biosynthesis; isopentenyl diphosphate biosynthesis via DXP pathway; isopentenyl diphosphate from 1-deoxy-D-xylulose 5-phosphate: step 5/6. In terms of biological role, converts 2C-methyl-D-erythritol 2,4-cyclodiphosphate (ME-2,4cPP) into 1-hydroxy-2-methyl-2-(E)-butenyl 4-diphosphate. The protein is 4-hydroxy-3-methylbut-2-en-1-yl diphosphate synthase (flavodoxin) of Macrococcus caseolyticus (strain JCSC5402) (Macrococcoides caseolyticum).